The primary structure comprises 355 residues: Chemerin-like receptor 2 (355 aa).

The Extracellular portion of the chain corresponds to 1-41 (MEDLEETLFEEFENYSYDLDYYSLESDLEEKVQLGVVHWVS). Asparagine 14 carries N-linked (GlcNAc...) asparagine glycosylation. The helical transmembrane segment at 42–62 (LVLYCLAFVLGIPGNAIVIWF) threads the bilayer. Residues 63–73 (TGFKWKKTVTT) are Cytoplasmic-facing. The chain crosses the membrane as a helical span at residues 74–94 (LWFLNLAIADFIFLLFLPLYI). The Extracellular segment spans residues 95–112 (SYVAMNFHWPFGIWLCKA). An intrachain disulfide couples cysteine 110 to cysteine 187. Residues 113–133 (NSFTAQLNMFASVFFLTVISL) traverse the membrane as a helical segment. Over 134–154 (DHYIHLIHPVLSHRHRTLKNS) the chain is Cytoplasmic. A helical membrane pass occupies residues 155-175 (LIVIIFIWLLASLIGGPALYF). Residues 176-210 (RDTVEFNNHTLCYNNFQKHDPDLTLIRHHVLTWVK) lie on the Extracellular side of the membrane. Residues 211–231 (FIIGYLFPLLTMSICYLCLIF) traverse the membrane as a helical segment. The Cytoplasmic segment spans residues 232-247 (KVKKRSILISSRHFWT). A helical membrane pass occupies residues 248–268 (ILVVVVAFVVCWTPYHLFSIW). The Extracellular segment spans residues 269–286 (ELTIHHNSYSHHVMQAGI). A helical membrane pass occupies residues 287-307 (PLSTGLAFLNSCLNPILYVLI). Over 308-355 (SKKFQARFRSSVAEILKYTLWEVSCSGTVSEQLRNSETKNLCLLETAQ) the chain is Cytoplasmic.

Belongs to the chemokine-like receptor (CMKLR) family. As to expression, expressed in hippocampus.

It is found in the cell membrane. Receptor for chemoattractant adipokine chemerin/RARRES2 suggesting a role for this receptor in the regulation of inflammation and energy homesotasis. Signals mainly via beta-arrestin pathway. Binding of RARRES2 activates weakly G proteins, calcium mobilization and MAPK1/MAPK3 (ERK1/2) phosphorylation too. Also acts as a receptor for TAFA1, mediates its effects on neuronal stem-cell proliferation and differentiation via the activation of ROCK/ERK and ROCK/STAT3 signaling pathway. Functionally, (Microbial infection) Coreceptor for HIV-1. This Homo sapiens (Human) protein is Chemerin-like receptor 2.